Reading from the N-terminus, the 424-residue chain is Kynureninase (424 aa).

Pyridoxal 5'-phosphate contacts are provided by residues L109, T110, 137-140, D222, H225, and Y247; that span reads FPSD. Position 248 is an N6-(pyridoxal phosphate)lysine (K248). Pyridoxal 5'-phosphate contacts are provided by W278 and N306.

This sequence belongs to the kynureninase family. In terms of assembly, homodimer. Pyridoxal 5'-phosphate is required as a cofactor.

It catalyses the reaction L-kynurenine + H2O = anthranilate + L-alanine + H(+). The enzyme catalyses 3-hydroxy-L-kynurenine + H2O = 3-hydroxyanthranilate + L-alanine + H(+). Its pathway is amino-acid degradation; L-kynurenine degradation; L-alanine and anthranilate from L-kynurenine: step 1/1. It functions in the pathway cofactor biosynthesis; NAD(+) biosynthesis; quinolinate from L-kynurenine: step 2/3. Functionally, catalyzes the cleavage of L-kynurenine (L-Kyn) and L-3-hydroxykynurenine (L-3OHKyn) into anthranilic acid (AA) and 3-hydroxyanthranilic acid (3-OHAA), respectively. This is Kynureninase from Koribacter versatilis (strain Ellin345).